The sequence spans 267 residues: NAD kinase (267 aa).

The active-site Proton acceptor is Asp-45. NAD(+) is bound by residues Asp-45–Gly-46, Asn-122–Glu-123, Arg-148, Asp-150, Thr-161–Ser-166, Ala-185, and Gln-223.

It belongs to the NAD kinase family. Requires a divalent metal cation as cofactor.

It is found in the cytoplasm. It catalyses the reaction NAD(+) + ATP = ADP + NADP(+) + H(+). Its function is as follows. Involved in the regulation of the intracellular balance of NAD and NADP, and is a key enzyme in the biosynthesis of NADP. Catalyzes specifically the phosphorylation on 2'-hydroxyl of the adenosine moiety of NAD to yield NADP. This chain is NAD kinase, found in Levilactobacillus brevis (strain ATCC 367 / BCRC 12310 / CIP 105137 / JCM 1170 / LMG 11437 / NCIMB 947 / NCTC 947) (Lactobacillus brevis).